The primary structure comprises 369 residues: Type 2 DNA topoisomerase 6 subunit A (369 aa).

The region spanning 11 to 149 (QRDLLAREKL…FHMRPEEDGA (139 aa)) is the Topo IIA-type catalytic domain. Catalysis depends on tyrosine 106, which acts as the O-(5'-phospho-DNA)-tyrosine intermediate. Residues glutamate 202 and aspartate 254 each contribute to the Mg(2+) site.

The protein belongs to the TOP6A family. As to quaternary structure, homodimer. Heterotetramer of two Top6A and two Top6B chains. Mg(2+) is required as a cofactor.

It catalyses the reaction ATP-dependent breakage, passage and rejoining of double-stranded DNA.. Its function is as follows. Relaxes both positive and negative superturns and exhibits a strong decatenase activity. The sequence is that of Type 2 DNA topoisomerase 6 subunit A from Methanosarcina barkeri (strain Fusaro / DSM 804).